The sequence spans 742 residues: Cullin-2 (742 aa).

Residues 672–734 (DRRYAIDAAL…RDYLERDTDN (63 aa)) enclose the Cullin neddylation domain. A Glycyl lysine isopeptide (Lys-Gly) (interchain with G-Cter in NEDD8) cross-link involves residue lysine 686.

The protein belongs to the cullin family. In terms of assembly, interacts with SKIP17 and FBW2/SKIP18. Neddylated; which enhances the ubiquitination activity of E3 ubiquitin-protein ligase complexes.

Functionally, core component of multiple SCF (SKP1-CUL1-F-box protein) E3 ubiquitin-protein ligase complexes. Involved in ubiquitination and subsequent proteasomal degradation of target proteins. In Arabidopsis thaliana (Mouse-ear cress), this protein is Cullin-2 (CUL2).